Here is a 165-residue protein sequence, read N- to C-terminus: Transcription factor zip-10 (165 aa).

Residues 53-71 (ASLGTSTTSSSRCSSTESS) show a composition bias toward low complexity. The tract at residues 53–99 (ASLGTSTTSSSRCSSTESSAAPGKIRRGRPQQEIADGQDAHSQKKRH) is disordered. Residues 104 to 150 (ARQYRAQMRQKVENVKSLHDEKEQLELEVKALRQAVSGLQQENAQKD) are a coiled coil.

Its subcellular location is the nucleus. Functionally, transcription factor that regulates the expression of genes in response to changes in temperature. In particular, binds to the promoter region of genes such as asp-17 in response to severe cold to warm temperature transitions to promote gene expression. Promotes stress-induced death, particularly in older animals, following cold shock followed by warming and this may have evolved as a form of kin survival under thermal stress conditions, favoring the survival of younger animals. The sequence is that of Transcription factor zip-10 from Caenorhabditis elegans.